Consider the following 294-residue polypeptide: Cutinase (294 aa).

The first 33 residues, 1-33, serve as a signal peptide directing secretion; it reads MLRARPSHRLASAAAVVAATGAALLAGSSPAAA. Cys36 and Cys107 are joined by a disulfide. Ser118 serves as the catalytic Nucleophile. An intrachain disulfide couples Cys180 to Cys187. Asp184 is an active-site residue. The active-site Proton donor/acceptor is the His198. Residues 222 to 241 form a disordered region; the sequence is GTPTTPTPTPTPTPVPTTCV. The segment covering 226 to 236 has biased composition (pro residues); that stretch reads TPTPTPTPTPV. The may be involved in substrate binding stretch occupies residues 240-294; it reads CVRDSTRDHVAADRAVSLYGRAYARGSRDSLGATSSYNVVSLQQVEGGWRLVTAC.

It belongs to the cutinase family.

The protein resides in the secreted. It carries out the reaction cutin + H2O = cutin monomers.. The catalysed reaction is a tetradecanoate ester + H2O = an aliphatic alcohol + tetradecanoate + H(+). The enzyme catalyses hexadecanoate ester + H2O = an aliphatic alcohol + hexadecanoate + H(+). It catalyses the reaction a butanoate ester + H2O = an aliphatic alcohol + butanoate + H(+). It carries out the reaction an octanoate ester + H2O = an aliphatic alcohol + octanoate + H(+). Functionally, catalyzes the hydrolysis of cutin, a polyester that forms the structure of plant cuticle. Shows esterase activity towards p-nitrophenol-linked aliphatic esters (pNP-aliphatic esters). Can depolymerize synthetic polyesters such as poly(epsilon-caprolactone) (PCL) and poly(1,3-propylene adipate) (PPA). Exhibits some activity on poly(lactic acid) (PLA). Can bind but not hydrolyze poly(hydroxybutyrate) (PHB). The sequence is that of Cutinase from Kineococcus radiotolerans (strain ATCC BAA-149 / DSM 14245 / SRS30216).